Consider the following 88-residue polypeptide: Phosphocarrier protein HPr (88 aa).

Positions 1 to 88 (MKKFQAVIKD…KACLEKNKVI (88 aa)) constitute an HPr domain. Histidine 15 functions as the Pros-phosphohistidine intermediate in the catalytic mechanism. Serine 47 carries the phosphoserine; by HPrK/P modification.

The protein belongs to the HPr family.

The protein resides in the cytoplasm. With respect to regulation, phosphorylation on Ser-47 inhibits the phosphoryl transfer from enzyme I to HPr. General (non sugar-specific) component of the phosphoenolpyruvate-dependent sugar phosphotransferase system (sugar PTS). This major carbohydrate active-transport system catalyzes the phosphorylation of incoming sugar substrates concomitantly with their translocation across the cell membrane. The phosphoryl group from phosphoenolpyruvate (PEP) is transferred to the phosphoryl carrier protein HPr by enzyme I. Phospho-HPr then transfers it to the PTS EIIA domain. Functionally, P-Ser-HPr interacts with the catabolite control protein A (CcpA), forming a complex that binds to DNA at the catabolite response elements cre, operator sites preceding a large number of catabolite-regulated genes. Thus, P-Ser-HPr is a corepressor in carbon catabolite repression (CCR), a mechanism that allows bacteria to coordinate and optimize the utilization of available carbon sources. P-Ser-HPr also plays a role in inducer exclusion, in which it probably interacts with several non-PTS permeases and inhibits their transport activity. The chain is Phosphocarrier protein HPr (ptsH) from Mycoplasma genitalium (strain ATCC 33530 / DSM 19775 / NCTC 10195 / G37) (Mycoplasmoides genitalium).